The following is a 446-amino-acid chain: Tubulin beta chain (446 aa).

Q11, E69, S138, G142, T143, G144, N204, and N226 together coordinate GTP. Mg(2+) is bound at residue E69. The tract at residues Y425 to E446 is disordered. A compositionally biased stretch (acidic residues) spans E432–E446.

Belongs to the tubulin family. In terms of assembly, dimer of alpha and beta chains. A typical microtubule is a hollow water-filled tube with an outer diameter of 25 nm and an inner diameter of 15 nM. Alpha-beta heterodimers associate head-to-tail to form protofilaments running lengthwise along the microtubule wall with the beta-tubulin subunit facing the microtubule plus end conferring a structural polarity. Microtubules usually have 13 protofilaments but different protofilament numbers can be found in some organisms and specialized cells. Mg(2+) serves as cofactor.

It is found in the cytoplasm. The protein resides in the cytoskeleton. In terms of biological role, tubulin is the major constituent of microtubules, a cylinder consisting of laterally associated linear protofilaments composed of alpha- and beta-tubulin heterodimers. Microtubules grow by the addition of GTP-tubulin dimers to the microtubule end, where a stabilizing cap forms. Below the cap, tubulin dimers are in GDP-bound state, owing to GTPase activity of alpha-tubulin. This chain is Tubulin beta chain (TUB2), found in Blumeria hordei (Barley powdery mildew).